Here is a 139-residue protein sequence, read N- to C-terminus: Interleukin-5 (139 aa).

Residues M1 to Y19 form the signal peptide. N48, N77, and N91 each carry an N-linked (GlcNAc...) asparagine glycan.

This sequence belongs to the IL-5 family. As to quaternary structure, homodimer; disulfide-linked. Interacts with IL5RA. Interacts with CSF2RB.

It is found in the secreted. In terms of biological role, homodimeric cytokine expressed predominantly by T-lymphocytes and NK cells that plays an important role in the survival, differentiation, and chemotaxis of eosinophils. Also acts on activated and resting B-cells to induce immunoglobulin production, growth, and differentiation. Mechanistically, exerts its biological effects through a receptor composed of IL5RA subunit and the cytokine receptor common subunit beta/CSF2RB. Binding to the receptor leads to activation of various kinases including LYN, SYK and JAK2 and thereby propagates signals through the RAS-MAPK and JAK-STAT5 pathways respectively. The polypeptide is Interleukin-5 (IL5) (Notamacropus eugenii (Tammar wallaby)).